Here is a 233-residue protein sequence, read N- to C-terminus: ATP synthase subunit a (233 aa).

7 helical membrane passes run 29–49 (FKHVFYTWCVMAMLFAVSFIV), 60–80 (LQNIFEVIIGGLEEFVVSITG), 89–109 (VLIVFFLFILCMNLTGLVPGF), 115–135 (NINTTASLALFCFIYYNYIGI), 143–163 (IKHFMGPMWWLSPLMLPLELI), 185–205 (FVLILFFMLAPIIGTIPIYFL), and 206–226 (FTLAKVLQAFIFFMLATIYLK).

This sequence belongs to the ATPase A chain family. F-type ATPases have 2 components, CF(1) - the catalytic core - and CF(0) - the membrane proton channel. CF(1) has five subunits: alpha(3), beta(3), gamma(1), delta(1), epsilon(1). CF(0) has three main subunits: a(1), b(2) and c(9-12). The alpha and beta chains form an alternating ring which encloses part of the gamma chain. CF(1) is attached to CF(0) by a central stalk formed by the gamma and epsilon chains, while a peripheral stalk is formed by the delta and b chains.

It localises to the cell inner membrane. Functionally, key component of the proton channel; it plays a direct role in the translocation of protons across the membrane. This Oleidesulfovibrio alaskensis (strain ATCC BAA-1058 / DSM 17464 / G20) (Desulfovibrio alaskensis) protein is ATP synthase subunit a.